The chain runs to 353 residues: UPF0283 membrane protein KPN78578_12740 (353 aa).

A run of 3 helical transmembrane segments spans residues Met70–Thr90, Trp99–Leu119, and Glu213–Trp233.

This sequence belongs to the UPF0283 family.

It is found in the cell inner membrane. This Klebsiella pneumoniae subsp. pneumoniae (strain ATCC 700721 / MGH 78578) protein is UPF0283 membrane protein KPN78578_12740.